Here is a 219-residue protein sequence, read N- to C-terminus: 2-C-methyl-D-erythritol 4-phosphate cytidylyltransferase (219 aa).

The protein belongs to the IspD/TarI cytidylyltransferase family. IspD subfamily.

It carries out the reaction 2-C-methyl-D-erythritol 4-phosphate + CTP + H(+) = 4-CDP-2-C-methyl-D-erythritol + diphosphate. Its pathway is isoprenoid biosynthesis; isopentenyl diphosphate biosynthesis via DXP pathway; isopentenyl diphosphate from 1-deoxy-D-xylulose 5-phosphate: step 2/6. In terms of biological role, catalyzes the formation of 4-diphosphocytidyl-2-C-methyl-D-erythritol from CTP and 2-C-methyl-D-erythritol 4-phosphate (MEP). The polypeptide is 2-C-methyl-D-erythritol 4-phosphate cytidylyltransferase (Bacteroides thetaiotaomicron (strain ATCC 29148 / DSM 2079 / JCM 5827 / CCUG 10774 / NCTC 10582 / VPI-5482 / E50)).